The chain runs to 361 residues: Phospho-N-acetylmuramoyl-pentapeptide-transferase (361 aa).

The next 10 membrane-spanning stretches (helical) occupy residues 25-45 (RGIL…PAVI), 73-93 (TMGG…WGDL), 98-118 (VWLV…DDWI), 139-159 (IFGL…AAIT), 168-188 (IALP…IVGF), 200-220 (GLAI…AYAS), 237-257 (AGEL…FLWF), 264-284 (VFMG…IAVI), 289-309 (MVLV…IIQV), and 339-359 (VIVR…ATLK).

It belongs to the glycosyltransferase 4 family. MraY subfamily. It depends on Mg(2+) as a cofactor.

The protein resides in the cell inner membrane. It catalyses the reaction UDP-N-acetyl-alpha-D-muramoyl-L-alanyl-gamma-D-glutamyl-meso-2,6-diaminopimeloyl-D-alanyl-D-alanine + di-trans,octa-cis-undecaprenyl phosphate = di-trans,octa-cis-undecaprenyl diphospho-N-acetyl-alpha-D-muramoyl-L-alanyl-D-glutamyl-meso-2,6-diaminopimeloyl-D-alanyl-D-alanine + UMP. The protein operates within cell wall biogenesis; peptidoglycan biosynthesis. Functionally, catalyzes the initial step of the lipid cycle reactions in the biosynthesis of the cell wall peptidoglycan: transfers peptidoglycan precursor phospho-MurNAc-pentapeptide from UDP-MurNAc-pentapeptide onto the lipid carrier undecaprenyl phosphate, yielding undecaprenyl-pyrophosphoryl-MurNAc-pentapeptide, known as lipid I. The polypeptide is Phospho-N-acetylmuramoyl-pentapeptide-transferase (Xanthomonas oryzae pv. oryzae (strain PXO99A)).